The chain runs to 96 residues: Large ribosomal subunit protein eL14 (96 aa).

Belongs to the eukaryotic ribosomal protein eL14 family.

The polypeptide is Large ribosomal subunit protein eL14 (Saccharolobus solfataricus (strain ATCC 35092 / DSM 1617 / JCM 11322 / P2) (Sulfolobus solfataricus)).